The following is a 403-amino-acid chain: CCA-adding enzyme (403 aa).

Residues Gly-32 and Arg-35 each contribute to the ATP site. CTP-binding residues include Gly-32 and Arg-35. Mg(2+)-binding residues include Asp-45 and Asp-47. ATP is bound by residues Arg-116, Asp-159, Arg-162, Arg-165, and Arg-168. CTP is bound by residues Arg-116, Asp-159, Arg-162, Arg-165, and Arg-168.

This sequence belongs to the tRNA nucleotidyltransferase/poly(A) polymerase family. Bacterial CCA-adding enzyme type 3 subfamily. Homodimer. The cofactor is Mg(2+).

The catalysed reaction is a tRNA precursor + 2 CTP + ATP = a tRNA with a 3' CCA end + 3 diphosphate. The enzyme catalyses a tRNA with a 3' CCA end + 2 CTP + ATP = a tRNA with a 3' CCACCA end + 3 diphosphate. Its function is as follows. Catalyzes the addition and repair of the essential 3'-terminal CCA sequence in tRNAs without using a nucleic acid template. Adds these three nucleotides in the order of C, C, and A to the tRNA nucleotide-73, using CTP and ATP as substrates and producing inorganic pyrophosphate. tRNA 3'-terminal CCA addition is required both for tRNA processing and repair. Also involved in tRNA surveillance by mediating tandem CCA addition to generate a CCACCA at the 3' terminus of unstable tRNAs. While stable tRNAs receive only 3'-terminal CCA, unstable tRNAs are marked with CCACCA and rapidly degraded. This is CCA-adding enzyme from Streptococcus suis (strain 98HAH33).